A 375-amino-acid chain; its full sequence is MSATDATQVISATTTTVKRFKGALIGCGFFSRNHLHAWRDIDGAEIVALCDADSERLRAAGQAFGIERLYRDAAAMLSAEQLDFVDIATTAPSHRSLVELAAQAGVAAICQKPFALTLADARAMVAACERAGVPLMVHENFRWQPAIQAVGRALRDGAIGTPFWGRVSFRSAFDVFSGQPYLARNERFIVEDLGIHILDIARFLFGDVTRLAAATSRVNSAIAGEDVATILLTHESGVTSVVDCSYASRQARELFPQTLVEVDGAEGTLRLSADYRLEIHNRDGTRTATAAPPPLAWASVPWEAIQASVVNIQRHWIACLRNGGEPQTSGRDNLKTLALVEATYLSAREGRTVELKSLEAEAPAVTSTSSGAVRR.

Residue 29-30 (FF) participates in NAD(+) binding. Tryptophan 38, arginine 39, isoleucine 41, and alanine 44 together coordinate Mg(2+). Residues aspartate 51, serine 93, 111–112 (QK), asparagine 140, and 179–181 (QPY) each bind NAD(+). Residue lysine 112 coordinates substrate. Glutamine 179, aspartate 192, histidine 196, and tyrosine 246 together coordinate substrate.

This sequence belongs to the Gfo/Idh/MocA family.

It catalyses the reaction D-apiofuranose + NAD(+) = D-apionolactone + NADH + H(+). It functions in the pathway carbohydrate metabolism. In terms of biological role, involved in catabolism of D-apiose. Catalyzes oxidation of D-apiose to D-apionolactone. The chain is D-apiose dehydrogenase from Paraburkholderia graminis (strain ATCC 700544 / DSM 17151 / LMG 18924 / NCIMB 13744 / C4D1M).